The chain runs to 142 residues: Large ribosomal subunit protein uL13 (142 aa).

This sequence belongs to the universal ribosomal protein uL13 family. In terms of assembly, part of the 50S ribosomal subunit.

This protein is one of the early assembly proteins of the 50S ribosomal subunit, although it is not seen to bind rRNA by itself. It is important during the early stages of 50S assembly. This chain is Large ribosomal subunit protein uL13, found in Hamiltonella defensa subsp. Acyrthosiphon pisum (strain 5AT).